A 402-amino-acid chain; its full sequence is UPF0261 protein mll9388 (402 aa).

The protein belongs to the UPF0261 family.

The protein is UPF0261 protein mll9388 of Mesorhizobium japonicum (strain LMG 29417 / CECT 9101 / MAFF 303099) (Mesorhizobium loti (strain MAFF 303099)).